Consider the following 305-residue polypeptide: uncharacterized protein (305 aa).

Positions 1–10 are enriched in basic residues; the sequence is MLWAQRKKRK. The interval 1 to 30 is disordered; sequence MLWAQRKKRKATTETTEDKPAESHRPNDSW. A compositionally biased stretch (basic and acidic residues) spans 16–27; sequence TEDKPAESHRPN. Ser39 carries the post-translational modification Phosphoserine. Positions 92 to 101 are enriched in polar residues; the sequence is QKISGTSVSK. The disordered stretch occupies residues 92–114; sequence QKISGTSVSKEMQRESGKSPSME. At Ser158 the chain carries Phosphoserine. A compositionally biased stretch (low complexity) spans 197–208; that stretch reads SHHGNQSHQNHN. A disordered region spans residues 197–305; it reads SHHGNQSHQN…VNRRNQIYDS (109 aa). Polar residues-rich tracts occupy residues 209–221 and 231–244; these read TYPCHQNNQSRSV and LSHQGYPSYSSHQN. Over residues 247 to 293 the composition is skewed to low complexity; that stretch reads GHPSQQGHSSHSNQQGHLGLSSQQGHPSQSSHQSHQGQPGHPNHQSH. Residues 294 to 305 are compositionally biased toward polar residues; that stretch reads SLVNRRNQIYDS.

This is an uncharacterized protein from Rattus norvegicus (Rat).